A 248-amino-acid chain; its full sequence is 2,3-bisphosphoglycerate-dependent phosphoglycerate mutase (248 aa).

Substrate is bound by residues 8 to 15 (RHGESTWN), 21 to 22 (TG), arginine 60, 87 to 90 (ERHY), lysine 98, 114 to 115 (RR), and 183 to 184 (GN). The active-site Tele-phosphohistidine intermediate is the histidine 9. Catalysis depends on glutamate 87, which acts as the Proton donor/acceptor.

The protein belongs to the phosphoglycerate mutase family. BPG-dependent PGAM subfamily. In terms of assembly, homodimer.

The enzyme catalyses (2R)-2-phosphoglycerate = (2R)-3-phosphoglycerate. Its pathway is carbohydrate degradation; glycolysis; pyruvate from D-glyceraldehyde 3-phosphate: step 3/5. Its function is as follows. Catalyzes the interconversion of 2-phosphoglycerate and 3-phosphoglycerate. In Burkholderia ambifaria (strain ATCC BAA-244 / DSM 16087 / CCUG 44356 / LMG 19182 / AMMD) (Burkholderia cepacia (strain AMMD)), this protein is 2,3-bisphosphoglycerate-dependent phosphoglycerate mutase.